The sequence spans 405 residues: Acetate kinase (405 aa).

N7 is a binding site for Mg(2+). Residue K14 participates in ATP binding. Position 90 (R90) interacts with substrate. D147 functions as the Proton donor/acceptor in the catalytic mechanism. Residues 207–211, 282–284, and 330–334 contribute to the ATP site; these read HLGNG, DMR, and GVGEN. E383 contributes to the Mg(2+) binding site.

The protein belongs to the acetokinase family. Homodimer. Mg(2+) serves as cofactor. Mn(2+) is required as a cofactor.

The protein localises to the cytoplasm. It catalyses the reaction acetate + ATP = acetyl phosphate + ADP. The protein operates within metabolic intermediate biosynthesis; acetyl-CoA biosynthesis; acetyl-CoA from acetate: step 1/2. Functionally, catalyzes the formation of acetyl phosphate from acetate and ATP. Can also catalyze the reverse reaction. This chain is Acetate kinase, found in Pseudothermotoga lettingae (strain ATCC BAA-301 / DSM 14385 / NBRC 107922 / TMO) (Thermotoga lettingae).